Here is a 368-residue protein sequence, read N- to C-terminus: Peptide chain release factor 2 (368 aa).

Glutamine 249 carries the post-translational modification N5-methylglutamine.

This sequence belongs to the prokaryotic/mitochondrial release factor family. Methylated by PrmC. Methylation increases the termination efficiency of RF2.

Its subcellular location is the cytoplasm. Functionally, peptide chain release factor 2 directs the termination of translation in response to the peptide chain termination codons UGA and UAA. In Rhodococcus jostii (strain RHA1), this protein is Peptide chain release factor 2.